Consider the following 293-residue polypeptide: Fructose-bisphosphate aldolase (293 aa).

Position 50 (Ser50) interacts with D-glyceraldehyde 3-phosphate. The Proton donor role is filled by Asp85. The Zn(2+) site is built by His86, Asp106, Glu136, and His178. Residue Gly179 participates in dihydroxyacetone phosphate binding. Residue His208 participates in Zn(2+) binding. Dihydroxyacetone phosphate is bound by residues 209–211 (GGS) and 230–233 (NVNT).

It belongs to the class II fructose-bisphosphate aldolase family. Requires Zn(2+) as cofactor.

The enzyme catalyses beta-D-fructose 1,6-bisphosphate = D-glyceraldehyde 3-phosphate + dihydroxyacetone phosphate. Its pathway is carbohydrate degradation; glycolysis; D-glyceraldehyde 3-phosphate and glycerone phosphate from D-glucose: step 4/4. In terms of biological role, catalyzes the aldol condensation of dihydroxyacetone phosphate (DHAP or glycerone-phosphate) with glyceraldehyde 3-phosphate (G3P) to form fructose 1,6-bisphosphate (FBP) in gluconeogenesis and the reverse reaction in glycolysis. This is Fructose-bisphosphate aldolase (fba) from Streptococcus pyogenes serotype M1.